The primary structure comprises 71 residues: uncharacterized protein (71 aa).

The segment at 23–71 (ENEKAGQSEEYDDDDKEENKKRRRNNGRRGPPEKKKSRRGGEEQTQRII) is disordered. Positions 52–71 (GPPEKKKSRRGGEEQTQRII) are enriched in basic and acidic residues.

This is an uncharacterized protein from Caenorhabditis elegans.